The sequence spans 555 residues: MATTNTFSDFKLASELPAWAKLQELYEKKGKTLSLKEAFATDEQRFQKYSRTFSNHDGSKILFDFSKNLVDDEILGALAQLAREANVTQLRDQMFNGEHINSTEDRAVYHVALRNRANKPMYVDGKNVAPEVDAVLQHMKEFSEQVRSGAWKGYTGKSIKDVVNIGIGGSDLGPVMVTEALKHYAGPLKVHFVSNIDGTHLAETLKEVDPETTLFLVASKTFTTAETITNATSAKNWFLSKTGNNPAHISKHFAALSTNETEVAKFGIDTKNMFGFESWVGGRYSVWSAIGLSVALYIGFDQFEDFLKGAEAVDKHFTSTPIEDNIPLLGGLLSVWYNNFFDAQTHLVVPFDQYLHRFPAYLQQLSMESNGKSVTRGNVFANYSTGSILFGEPATNAQHSFFQLVHQGTKVIPSDFILAAQSHNPIENNLHQKMLASNFFAQAEALMVGKDEAQVKAEGATGGLVPHKVFSGNRPTTSILVQKITPANLGALIAYYEHVTFTEGAIWNINSFDQWGVELGKVLAKVIGKDLDTTGETTSHDASTNGLINQFKAWL.

D-glucose 6-phosphate contacts are provided by residues 169-170 (GS), 219-224 (SKTFTT), Gln364, Glu368, His399, and Lys521. Glu368 functions as the Proton donor in the catalytic mechanism. Active-site residues include His399 and Lys521.

The protein belongs to the GPI family. In terms of assembly, homodimer.

Its subcellular location is the cytoplasm. It is found in the cytosol. The enzyme catalyses alpha-D-glucose 6-phosphate = beta-D-fructose 6-phosphate. Its pathway is carbohydrate degradation; glycolysis; D-glyceraldehyde 3-phosphate and glycerone phosphate from D-glucose: step 2/4. In the cytoplasm, catalyzes the conversion of glucose-6-phosphate to fructose-6-phosphate, the second step in glycolysis, and the reverse reaction during gluconeogenesis. In Eremothecium gossypii (strain ATCC 10895 / CBS 109.51 / FGSC 9923 / NRRL Y-1056) (Yeast), this protein is Glucose-6-phosphate isomerase (PGI1).